Here is a 343-residue protein sequence, read N- to C-terminus: Flagellar motor switch protein FliG (343 aa).

A Part of the EHPQR-motif motif is present at residues 137–140 (EHPQ). Residues 245-248 (MFTF) carry the M-F-X-F motif; its intrinsic flexibility is probably coupled to flagellar rotation motif.

Belongs to the FliG family.

The protein localises to the cell inner membrane. It localises to the bacterial flagellum basal body. In terms of biological role, one of the proteins that forms a switch complex that is proposed to be located at the base of the basal body. This complex interacts with chemotaxis proteins (such as CheY) in addition to contacting components of the motor that determine the direction of flagellar rotation. Required for flagellum synthesis and motility. In H.pylori four flagellar switch proteins are encoded, FliG, FliM, FliN and FliY. The protein is Flagellar motor switch protein FliG of Helicobacter pylori (strain ATCC 700392 / 26695) (Campylobacter pylori).